The chain runs to 512 residues: Cytochrome P450 monooxygenase cheE (512 aa).

Residues 5–27 (YFAAESSWSPYVILVLALAAMVA) traverse the membrane as a helical segment. N-linked (GlcNAc...) asparagine glycosylation is found at asparagine 53, asparagine 124, and asparagine 168. Cysteine 455 provides a ligand contact to heme. N-linked (GlcNAc...) asparagine glycosylation is found at asparagine 499 and asparagine 508.

This sequence belongs to the cytochrome P450 family. It depends on heme as a cofactor.

It is found in the membrane. Its pathway is secondary metabolite biosynthesis. Functionally, cytochrome P450 monooxygenase; part of the gene cluster that mediates the biosynthesis of chaetoglobosin A which has a unique inhibitory activity against actin polymerization in mammalian cells. Chaetoglobosin A and its intermediates are involved in the morphological differentiation of C.globosum. The first step of the pathway is the synthesis of prochaetoglobosin I via condensation of one acetyl-CoA, 8 malonyl-CoA, and a L-tryptophan molecule by the PKS-NRPS hybrid synthetase cheA, followed by reduction of backbone double bond to install desired geometry by the enoyl reductase cheB. Further multiple oxidation steps performed by the cytochrome P450 monooxygenases cheE and cheG, as well as by the FAD-linked oxidoreductase cheF, lead to the formation of chaetoglobosin A. Depending on the order of action of these reductases, distinct intermediates can be identified. Within the pathway, the cytochrome P450 monooxygenase cheE catalyzes a stereospecific epoxidation on prochaetoglobosin I, cytoglobosin D, and chaetoglobosin J intermediates. The FAD-linked oxidoreductase cheF performs dehydrogenation of the C-20 hydroxyl groups in the 20-dihyrochaetoglobosin A and cytoglobosin D intermediates. Finally, the cytochrome P450 monooxygenase cheG can catalyze the stereospecific dihydroxylation of prochaetoglobosin I and prochaetoglobosin IV at C-19 and C-20, respectively. The Diels-Alderase cheD may play a role in the post-PKS-NRPS biosynthetic steps catalyzing Diels-Alder cyclization. The polypeptide is Cytochrome P450 monooxygenase cheE (Chaetomium globosum (strain ATCC 6205 / CBS 148.51 / DSM 1962 / NBRC 6347 / NRRL 1970) (Soil fungus)).